The primary structure comprises 843 residues: Eisosome protein 1 (843 aa).

S2 bears the N-acetylserine mark. S2 carries the phosphoserine modification. A disordered region spans residues 13–44; it reads HNIGKTSGGGSRTSSITSSKKSLKHGSKSLRK. A compositionally biased stretch (basic residues) spans 33–44; sequence KSLKHGSKSLRK. S88 and S130 each carry phosphoserine. The disordered stretch occupies residues 120 to 174; it reads KMGPKVVRNNSITSATSKTSKESQTKRKSKESPGAAASKAYSMTMETTSLSSQTN. Polar residues-rich tracts occupy residues 127–137 and 163–174; these read RNNSITSATSK and TMETTSLSSQTN. A phosphoserine mark is found at S182, S401, S584, and S710. The tract at residues 717–843 is disordered; sequence DLPTQLEKIE…QDAISNQEKK (127 aa). T720 is subject to Phosphothreonine. A compositionally biased stretch (low complexity) spans 752–764; sequence STAAKEATETSSA. Residues S763 and S775 each carry the phosphoserine modification. The span at 781–797 shows a compositional bias: basic and acidic residues; the sequence is SGKEDANDCKSAEHSKE. Positions 798-810 are enriched in polar residues; the sequence is ISVSQKAGNNKSL. Residues S816, S828, S829, and S838 each carry the phosphoserine modification.

Belongs to the EIS1 family.

The protein localises to the cytoplasmic granule. It localises to the cell membrane. Functionally, required for normal formation of eisosomes, large cytoplasmic protein assemblies that localize to specialized domains on plasma membrane and mark the site of endocytosis. The sequence is that of Eisosome protein 1 (EIS1) from Saccharomyces cerevisiae (strain RM11-1a) (Baker's yeast).